The chain runs to 505 residues: Deoxyguanosinetriphosphate triphosphohydrolase (505 aa).

One can recognise an HD domain in the interval 66–273 (RLTHSMEVQQ…MEAADDISYC (208 aa)).

Belongs to the dGTPase family. Type 1 subfamily. As to quaternary structure, homotetramer. Mg(2+) is required as a cofactor.

It catalyses the reaction dGTP + H2O = 2'-deoxyguanosine + triphosphate + H(+). Functionally, dGTPase preferentially hydrolyzes dGTP over the other canonical NTPs. The polypeptide is Deoxyguanosinetriphosphate triphosphohydrolase (Escherichia fergusonii (strain ATCC 35469 / DSM 13698 / CCUG 18766 / IAM 14443 / JCM 21226 / LMG 7866 / NBRC 102419 / NCTC 12128 / CDC 0568-73)).